We begin with the raw amino-acid sequence, 398 residues long: Riboflavin biosynthesis protein RibBA (398 aa).

The DHBP synthase stretch occupies residues 1–199; it reads MFHPIEEALD…IKDLIQYRYN (199 aa). Residues 26–27, D31, 138–142, and E162 contribute to the D-ribulose 5-phosphate site; these read RE and RAGHT. A Mg(2+)-binding site is contributed by E27. A Mg(2+)-binding site is contributed by H141. Residues 200 to 398 form a GTP cyclohydrolase II region; sequence LTTLVEREVD…MNKLGHLLHF (199 aa). 251-255 serves as a coordination point for GTP; it reads RVHSE. C256, C267, and C269 together coordinate Zn(2+). GTP is bound by residues Q272, 294–296, and T316; that span reads EGR. D328 serves as the catalytic Proton acceptor; for GTP cyclohydrolase activity. R330 (nucleophile; for GTP cyclohydrolase activity) is an active-site residue. T351 and K356 together coordinate GTP.

This sequence in the N-terminal section; belongs to the DHBP synthase family. The protein in the C-terminal section; belongs to the GTP cyclohydrolase II family. Mg(2+) serves as cofactor. The cofactor is Mn(2+). Requires Zn(2+) as cofactor.

The catalysed reaction is D-ribulose 5-phosphate = (2S)-2-hydroxy-3-oxobutyl phosphate + formate + H(+). The enzyme catalyses GTP + 4 H2O = 2,5-diamino-6-hydroxy-4-(5-phosphoribosylamino)-pyrimidine + formate + 2 phosphate + 3 H(+). The protein operates within cofactor biosynthesis; riboflavin biosynthesis; 2-hydroxy-3-oxobutyl phosphate from D-ribulose 5-phosphate: step 1/1. It participates in cofactor biosynthesis; riboflavin biosynthesis; 5-amino-6-(D-ribitylamino)uracil from GTP: step 1/4. Its function is as follows. Catalyzes the conversion of D-ribulose 5-phosphate to formate and 3,4-dihydroxy-2-butanone 4-phosphate. In terms of biological role, catalyzes the conversion of GTP to 2,5-diamino-6-ribosylamino-4(3H)-pyrimidinone 5'-phosphate (DARP), formate and pyrophosphate. The chain is Riboflavin biosynthesis protein RibBA from Bacillus subtilis (strain 168).